The following is a 55-amino-acid chain: uncharacterized protein (55 aa).

The protein localises to the plastid. This is an uncharacterized protein from Cuscuta reflexa (Southern Asian dodder).